A 124-amino-acid chain; its full sequence is Large ribosomal subunit protein bL12 (124 aa).

It belongs to the bacterial ribosomal protein bL12 family. In terms of assembly, homodimer. Part of the ribosomal stalk of the 50S ribosomal subunit. Forms a multimeric L10(L12)X complex, where L10 forms an elongated spine to which 2 to 4 L12 dimers bind in a sequential fashion. Binds GTP-bound translation factors.

Forms part of the ribosomal stalk which helps the ribosome interact with GTP-bound translation factors. Is thus essential for accurate translation. The sequence is that of Large ribosomal subunit protein bL12 from Desulforamulus reducens (strain ATCC BAA-1160 / DSM 100696 / MI-1) (Desulfotomaculum reducens).